The sequence spans 164 residues: MAKKNAKKSKNSSASIARNKRATFDYKFEEKMEAGLSLMGWEVKSIRMGKVNLSESYVFMRDGEAFLFGCTIAPLNTASTHVVCDPMRSRKLLLKRKELDKLQGLVDRKGYSIVPISMYWQKGAWVKIEIGLGKGKKEHDKRDDTKDREWQIEKARTMKKAVQQ.

This sequence belongs to the SmpB family.

It localises to the cytoplasm. In terms of biological role, required for rescue of stalled ribosomes mediated by trans-translation. Binds to transfer-messenger RNA (tmRNA), required for stable association of tmRNA with ribosomes. tmRNA and SmpB together mimic tRNA shape, replacing the anticodon stem-loop with SmpB. tmRNA is encoded by the ssrA gene; the 2 termini fold to resemble tRNA(Ala) and it encodes a 'tag peptide', a short internal open reading frame. During trans-translation Ala-aminoacylated tmRNA acts like a tRNA, entering the A-site of stalled ribosomes, displacing the stalled mRNA. The ribosome then switches to translate the ORF on the tmRNA; the nascent peptide is terminated with the 'tag peptide' encoded by the tmRNA and targeted for degradation. The ribosome is freed to recommence translation, which seems to be the essential function of trans-translation. This Shewanella sediminis (strain HAW-EB3) protein is SsrA-binding protein.